We begin with the raw amino-acid sequence, 362 residues long: Probable peptidyl-prolyl cis-trans isomerase C27F1.06c (362 aa).

S69 bears the Phosphoserine mark. The disordered stretch occupies residues 144–274; that stretch reads DEFSSDEEEM…KVKGDGPAAK (131 aa). Acidic residues-rich tracts occupy residues 146 to 167 and 175 to 189; these read FSSD…EEEE and LNSD…EEEI. Position 177 is a phosphoserine (S177). Positions 190–218 are enriched in basic and acidic residues; that stretch reads LEKPVPKDEVAEKHSKDKLKKEEKEKKTA. The PPIase FKBP-type domain occupies 276–362; sequence KKRVSMRYIG…VFDVKLLAVN (87 aa).

It belongs to the FKBP-type PPIase family. FKBP3/4 subfamily.

The enzyme catalyses [protein]-peptidylproline (omega=180) = [protein]-peptidylproline (omega=0). Its function is as follows. PPIases accelerate the folding of proteins. It catalyzes the cis-trans isomerization of proline imidic peptide bonds in oligopeptides. The protein is Probable peptidyl-prolyl cis-trans isomerase C27F1.06c of Schizosaccharomyces pombe (strain 972 / ATCC 24843) (Fission yeast).